Here is a 107-residue protein sequence, read N- to C-terminus: RecQ-mediated genome instability protein 2 homolog (107 aa).

It belongs to the RMI2 family. In terms of assembly, component of the RMI complex, containing at least top-3, rmh-1 and rmh-2. Component of the BTR double Holliday Junction dissolution complex composed of at least him-6, top-3, rmh-1 and rmif-2, which is involved in double strand break repair in the germline. Interacts with rmh-1; the interaction is direct and is required for mutual stability and localization at nuclear foci. As to expression, expressed in the germline.

It localises to the nucleus. In terms of biological role, essential component of the RMI complex, a complex that plays an important role in the processing of homologous recombination intermediates. Component of the BTR double Holliday Junction dissolution complex, which is involved in homologous recombination during meiotic double strand break in the germline. Plays a role in double strand break repair by positively regulating the accumulation of rad-51 at double strand breaks. Stabilizes and positively regulates the localization of the BTR double Holliday Junction dissolution complex components rmh-1, him-6 and top-3 at nuclear foci during meiotic recombination. Positively regulates meiotic recombination, chiasma formation, and chromosome segregation in meiosis. Positively regulates DNA crossover formation and positioning on chromosome arms (away from the chromosome center) during homologous recombination. In Caenorhabditis elegans, this protein is RecQ-mediated genome instability protein 2 homolog.